The sequence spans 162 residues: SCF ubiquitin ligase complex protein SKP1a (162 aa).

Serine 2 carries the N-acetylserine modification. Residues 100-162 (ILAANYLDIK…NEWCEDKGGN (63 aa)) form an interaction with the F-box domain of F-box proteins region. Proline 143 is modified (4-hydroxyproline). An O-linked (GlcNAc...) hydroxyproline glycan is attached at proline 143.

It belongs to the SKP1 family. In terms of assembly, multiprotein complex (SCF) with cullin and F-box-containing protein. Capable of undergoing aggregation. Post-translationally, O-linked glycan consists of linear Gal-Gal-Fuc-Gal-GlcNAc. FpaA and fpaB seem to be identically glycosylated. Glycosylation is required for nuclear enrichment. In terms of processing, hydroxylated by phyA.

The protein localises to the cytoplasm. The protein resides in the nucleus. This is SCF ubiquitin ligase complex protein SKP1a (fpaA) from Dictyostelium discoideum (Social amoeba).